The following is a 274-amino-acid chain: Dermonecrotic toxin LarSicTox-alphaIV1 (274 aa).

Histidine 5 is a catalytic residue. Positions 25 and 27 each coordinate Mg(2+). The Nucleophile role is filled by histidine 41. Cystine bridges form between cysteine 45–cysteine 51 and cysteine 47–cysteine 192. Aspartate 85 provides a ligand contact to Mg(2+).

It belongs to the arthropod phospholipase D family. Class II subfamily. Requires Mg(2+) as cofactor. In terms of tissue distribution, expressed by the venom gland.

The protein resides in the secreted. The enzyme catalyses an N-(acyl)-sphingosylphosphocholine = an N-(acyl)-sphingosyl-1,3-cyclic phosphate + choline. The catalysed reaction is an N-(acyl)-sphingosylphosphoethanolamine = an N-(acyl)-sphingosyl-1,3-cyclic phosphate + ethanolamine. It catalyses the reaction a 1-acyl-sn-glycero-3-phosphocholine = a 1-acyl-sn-glycero-2,3-cyclic phosphate + choline. It carries out the reaction a 1-acyl-sn-glycero-3-phosphoethanolamine = a 1-acyl-sn-glycero-2,3-cyclic phosphate + ethanolamine. Dermonecrotic toxins cleave the phosphodiester linkage between the phosphate and headgroup of certain phospholipids (sphingolipid and lysolipid substrates), forming an alcohol (often choline) and a cyclic phosphate. This toxin acts on sphingomyelin (SM). It may also act on ceramide phosphoethanolamine (CPE), lysophosphatidylcholine (LPC) and lysophosphatidylethanolamine (LPE), but not on lysophosphatidylserine (LPS), and lysophosphatidylglycerol (LPG). It acts by transphosphatidylation, releasing exclusively cyclic phosphate products as second products. Induces dermonecrosis, hemolysis, increased vascular permeability, edema, inflammatory response, and platelet aggregation. This is Dermonecrotic toxin LarSicTox-alphaIV1 from Loxosceles arizonica (Arizona brown spider).